Consider the following 207-residue polypeptide: Small ribosomal subunit protein uS4 (207 aa).

In terms of domain architecture, S4 RNA-binding spans 96 to 156 (SRLDNTVYRM…KKSHKQSRIR (61 aa)).

This sequence belongs to the universal ribosomal protein uS4 family. As to quaternary structure, part of the 30S ribosomal subunit. Contacts protein S5. The interaction surface between S4 and S5 is involved in control of translational fidelity.

One of the primary rRNA binding proteins, it binds directly to 16S rRNA where it nucleates assembly of the body of the 30S subunit. Functionally, with S5 and S12 plays an important role in translational accuracy. This Blochmanniella pennsylvanica (strain BPEN) protein is Small ribosomal subunit protein uS4.